A 454-amino-acid chain; its full sequence is Tol-Pal system protein TolB (454 aa).

A signal peptide spans 1–30; that stretch reads MNDARSITRRRFMTLTGSGLAMLGGGHAFA.

This sequence belongs to the TolB family. The Tol-Pal system is composed of five core proteins: the inner membrane proteins TolA, TolQ and TolR, the periplasmic protein TolB and the outer membrane protein Pal. They form a network linking the inner and outer membranes and the peptidoglycan layer.

It is found in the periplasm. Functionally, part of the Tol-Pal system, which plays a role in outer membrane invagination during cell division and is important for maintaining outer membrane integrity. This chain is Tol-Pal system protein TolB, found in Bradyrhizobium diazoefficiens (strain JCM 10833 / BCRC 13528 / IAM 13628 / NBRC 14792 / USDA 110).